Here is a 227-residue protein sequence, read N- to C-terminus: 2,3-bisphosphoglycerate-dependent phosphoglycerate mutase (227 aa).

Substrate is bound by residues 7–14 (RHGFSEWN), 20–21 (TG), R59, 86–89 (ERHY), K97, 113–114 (RR), and 182–183 (GN). The Tele-phosphohistidine intermediate role is filled by H8. E86 serves as the catalytic Proton donor/acceptor.

This sequence belongs to the phosphoglycerate mutase family. BPG-dependent PGAM subfamily. In terms of assembly, homodimer.

It carries out the reaction (2R)-2-phosphoglycerate = (2R)-3-phosphoglycerate. Its pathway is carbohydrate degradation; glycolysis; pyruvate from D-glyceraldehyde 3-phosphate: step 3/5. In terms of biological role, catalyzes the interconversion of 2-phosphoglycerate and 3-phosphoglycerate. This chain is 2,3-bisphosphoglycerate-dependent phosphoglycerate mutase, found in Glaesserella parasuis serovar 5 (strain SH0165) (Haemophilus parasuis).